Here is a 171-residue protein sequence, read N- to C-terminus: MDLKDYIRTVPDFPEPGILFRDITTLLHEPKALRYTIDSLAEQTGSLGADYVVGIESRGFMFGTPLAIKLDCGFVPVRKPGKLPAAVFKEEYTLEYGKNALEIHQDAFAAPSRVLVVDDLLATGGTAVAAAQLVERAGGTVVGFGFIIELTFLNGRAKLPEGPSAVALVSY.

Belongs to the purine/pyrimidine phosphoribosyltransferase family. In terms of assembly, homodimer.

It localises to the cytoplasm. The enzyme catalyses AMP + diphosphate = 5-phospho-alpha-D-ribose 1-diphosphate + adenine. It functions in the pathway purine metabolism; AMP biosynthesis via salvage pathway; AMP from adenine: step 1/1. Functionally, catalyzes a salvage reaction resulting in the formation of AMP, that is energically less costly than de novo synthesis. In Gloeobacter violaceus (strain ATCC 29082 / PCC 7421), this protein is Adenine phosphoribosyltransferase.